The primary structure comprises 204 residues: Recombination protein RecR (204 aa).

The C4-type zinc finger occupies 57–72; the sequence is CPTCFNYTDTDICRYC. In terms of domain architecture, Toprim spans 80-181; the sequence is ESICVVEEPS…KLSRIAHGVP (102 aa).

This sequence belongs to the RecR family.

Its function is as follows. May play a role in DNA repair. It seems to be involved in an RecBC-independent recombinational process of DNA repair. It may act with RecF and RecO. The sequence is that of Recombination protein RecR from Bdellovibrio bacteriovorus (strain ATCC 15356 / DSM 50701 / NCIMB 9529 / HD100).